The chain runs to 362 residues: Mannose-1-phosphate guanyltransferase (362 aa).

Belongs to the transferase hexapeptide repeat family.

Its subcellular location is the cytoplasm. The enzyme catalyses alpha-D-mannose 1-phosphate + GTP + H(+) = GDP-alpha-D-mannose + diphosphate. The protein operates within nucleotide-sugar biosynthesis; GDP-alpha-D-mannose biosynthesis; GDP-alpha-D-mannose from alpha-D-mannose 1-phosphate (GTP route): step 1/1. In terms of biological role, involved in cell wall synthesis where it is required for glycosylation. Involved in cell cycle progression through cell-size checkpoint. This is Mannose-1-phosphate guanyltransferase (MPG1) from Candida albicans (strain SC5314 / ATCC MYA-2876) (Yeast).